The sequence spans 343 residues: N-acetyl-gamma-glutamyl-phosphate reductase (343 aa).

The active site involves cysteine 150.

Belongs to the NAGSA dehydrogenase family. Type 1 subfamily.

The protein localises to the cytoplasm. It carries out the reaction N-acetyl-L-glutamate 5-semialdehyde + phosphate + NADP(+) = N-acetyl-L-glutamyl 5-phosphate + NADPH + H(+). The protein operates within amino-acid biosynthesis; L-arginine biosynthesis; N(2)-acetyl-L-ornithine from L-glutamate: step 3/4. In terms of biological role, catalyzes the NADPH-dependent reduction of N-acetyl-5-glutamyl phosphate to yield N-acetyl-L-glutamate 5-semialdehyde. This is N-acetyl-gamma-glutamyl-phosphate reductase from Nitrosococcus oceani (strain ATCC 19707 / BCRC 17464 / JCM 30415 / NCIMB 11848 / C-107).